The chain runs to 128 residues: Aspartate 1-decarboxylase (128 aa).

The active-site Schiff-base intermediate with substrate; via pyruvic acid is Ser25. Position 25 is a pyruvic acid (Ser) (Ser25). Residue Thr57 coordinates substrate. Catalysis depends on Tyr58, which acts as the Proton donor. Residue 73–75 (GSA) coordinates substrate.

The protein belongs to the PanD family. Heterooctamer of four alpha and four beta subunits. It depends on pyruvate as a cofactor. Post-translationally, is synthesized initially as an inactive proenzyme, which is activated by self-cleavage at a specific serine bond to produce a beta-subunit with a hydroxyl group at its C-terminus and an alpha-subunit with a pyruvoyl group at its N-terminus.

The protein resides in the cytoplasm. The catalysed reaction is L-aspartate + H(+) = beta-alanine + CO2. It participates in cofactor biosynthesis; (R)-pantothenate biosynthesis; beta-alanine from L-aspartate: step 1/1. Functionally, catalyzes the pyruvoyl-dependent decarboxylation of aspartate to produce beta-alanine. The protein is Aspartate 1-decarboxylase of Burkholderia cenocepacia (strain ATCC BAA-245 / DSM 16553 / LMG 16656 / NCTC 13227 / J2315 / CF5610) (Burkholderia cepacia (strain J2315)).